The chain runs to 644 residues: uncharacterized protein (644 aa).

Disordered stretches follow at residues 1–35 (MSSH…EYCS) and 48–106 (GNSH…SHHN). At S28 the chain carries Phosphoserine. Positions 58–70 (NGASSSNNNVAKS) are enriched in low complexity. Polar residues predominate over residues 83–106 (YDSTSNSNEPISFNEPDSSNSHHN). A run of 12 helical transmembrane segments spans residues 131-151 (ILPL…PLLF), 190-210 (AAFG…YGTM), 218-238 (LVLF…LYQS), 245-265 (YFVL…TVVA), 286-306 (LNFA…GFIV), 314-334 (YVFY…WLIL), 398-418 (VLLA…MGLL), 435-455 (LILS…FPLL), 522-542 (VWNA…LAVA), 546-566 (VALF…PCVQ), 583-603 (AAFA…YAFV), and 614-634 (NMIF…IFFM).

It localises to the membrane. This is an uncharacterized protein from Schizosaccharomyces pombe (strain 972 / ATCC 24843) (Fission yeast).